The chain runs to 185 residues: uncharacterized protein (185 aa).

The protein belongs to the EUO family.

This is an uncharacterized protein from Chlamydia muridarum (strain MoPn / Nigg).